The primary structure comprises 487 residues: Probable nuclear hormone receptor HR3 (487 aa).

The nuclear receptor DNA-binding region spans 48–123 (IIPCKVCGDK…LGMSRDAVKF (76 aa)). NR C4-type zinc fingers lie at residues 51 to 71 (CKVC…CEGC) and 87 to 111 (CPRN…LQKC). The tract at residues 145 to 176 (MRAQSDAAPDSSVYDTQTPSSSDQLHHNNYNS) is disordered. Polar residues predominate over residues 157-167 (VYDTQTPSSSD). Residues 237–480 (INDVLIKTLA…PALYKELFSI (244 aa)) form the NR LBD domain.

It belongs to the nuclear hormone receptor family. NR1 subfamily.

It is found in the nucleus. Its function is as follows. Putative receptor whose ligand is not yet known. The protein is Probable nuclear hormone receptor HR3 of Drosophila melanogaster (Fruit fly).